A 198-amino-acid polypeptide reads, in one-letter code: Protein GrpE (198 aa).

Positions 1–18 are enriched in basic and acidic residues; it reads MSEQEQKVEIPEVEKQEE. The segment at 1–33 is disordered; sequence MSEQEQKVEIPEVEKQEEVVVEETQQAEHSQEF.

The protein belongs to the GrpE family. As to quaternary structure, homodimer.

The protein resides in the cytoplasm. Its function is as follows. Participates actively in the response to hyperosmotic and heat shock by preventing the aggregation of stress-denatured proteins, in association with DnaK and GrpE. It is the nucleotide exchange factor for DnaK and may function as a thermosensor. Unfolded proteins bind initially to DnaJ; upon interaction with the DnaJ-bound protein, DnaK hydrolyzes its bound ATP, resulting in the formation of a stable complex. GrpE releases ADP from DnaK; ATP binding to DnaK triggers the release of the substrate protein, thus completing the reaction cycle. Several rounds of ATP-dependent interactions between DnaJ, DnaK and GrpE are required for fully efficient folding. The sequence is that of Protein GrpE from Haemophilus influenzae (strain ATCC 51907 / DSM 11121 / KW20 / Rd).